A 338-amino-acid chain; its full sequence is Aspartate carbamoyltransferase catalytic subunit (338 aa).

Carbamoyl phosphate is bound by residues arginine 59 and threonine 60. Residue lysine 87 participates in L-aspartate binding. Carbamoyl phosphate contacts are provided by arginine 109, histidine 142, and glutamine 145. L-aspartate-binding residues include arginine 182 and arginine 253. 2 residues coordinate carbamoyl phosphate: glycine 294 and proline 295.

This sequence belongs to the aspartate/ornithine carbamoyltransferase superfamily. ATCase family. As to quaternary structure, heterododecamer (2C3:3R2) of six catalytic PyrB chains organized as two trimers (C3), and six regulatory PyrI chains organized as three dimers (R2).

The catalysed reaction is carbamoyl phosphate + L-aspartate = N-carbamoyl-L-aspartate + phosphate + H(+). It participates in pyrimidine metabolism; UMP biosynthesis via de novo pathway; (S)-dihydroorotate from bicarbonate: step 2/3. In terms of biological role, catalyzes the condensation of carbamoyl phosphate and aspartate to form carbamoyl aspartate and inorganic phosphate, the committed step in the de novo pyrimidine nucleotide biosynthesis pathway. This Prochlorococcus marinus (strain SARG / CCMP1375 / SS120) protein is Aspartate carbamoyltransferase catalytic subunit.